The primary structure comprises 159 residues: SsrA-binding protein (159 aa).

It belongs to the SmpB family.

It localises to the cytoplasm. Required for rescue of stalled ribosomes mediated by trans-translation. Binds to transfer-messenger RNA (tmRNA), required for stable association of tmRNA with ribosomes. tmRNA and SmpB together mimic tRNA shape, replacing the anticodon stem-loop with SmpB. tmRNA is encoded by the ssrA gene; the 2 termini fold to resemble tRNA(Ala) and it encodes a 'tag peptide', a short internal open reading frame. During trans-translation Ala-aminoacylated tmRNA acts like a tRNA, entering the A-site of stalled ribosomes, displacing the stalled mRNA. The ribosome then switches to translate the ORF on the tmRNA; the nascent peptide is terminated with the 'tag peptide' encoded by the tmRNA and targeted for degradation. The ribosome is freed to recommence translation, which seems to be the essential function of trans-translation. The sequence is that of SsrA-binding protein from Dichelobacter nodosus (strain VCS1703A).